Reading from the N-terminus, the 392-residue chain is Streptogrisin-D (392 aa).

Positions 1 to 64 (MCVSRRRNSG…AGFTFQTANA (64 aa)) are cleaved as a signal peptide. Residues 65 to 204 (SDDVPAFGAK…NRTAGEFTPL (140 aa)) constitute a propeptide that is removed on maturation. A disulfide bond links cysteine 218 and cysteine 238. Catalysis depends on charge relay system residues histidine 237, aspartate 266, and serine 348. A disulfide bond links cysteine 342 and cysteine 369.

The protein belongs to the peptidase S1 family. In terms of assembly, homodimer.

In terms of biological role, has a primary specificity for large aliphatic or aromatic amino acids. This chain is Streptogrisin-D (sprD), found in Streptomyces griseus.